Here is a 329-residue protein sequence, read N- to C-terminus: Cytosolic arginine sensor for mTORC1 subunit 2 (329 aa).

ACT domains are found at residues A72–L139 and E262–Q322.

This sequence belongs to the GATS family. May form homodimers and heterodimers.

Its subcellular location is the cytoplasm. It is found in the cytosol. Functionally, functions as a negative regulator of the TORC1 signaling pathway. This Xenopus tropicalis (Western clawed frog) protein is Cytosolic arginine sensor for mTORC1 subunit 2.